The following is a 166-amino-acid chain: Lipoprotein signal peptidase (166 aa).

Transmembrane regions (helical) follow at residues 9-29, 45-65, 71-91, and 100-120; these read ASGALAPWLGISLIVILFDQL, ALTSFFNLVLVYNRGAAFGFL, WQRWAFTALGVGATLVICFLL, and FSVSLALILGGALGNVIDRLV. Active-site residues include Asp-126 and Asp-144. The chain crosses the membrane as a helical span at residues 135-155; sequence WHFPAFNLADSAITIGAVLLI.

This sequence belongs to the peptidase A8 family.

The protein resides in the cell inner membrane. The enzyme catalyses Release of signal peptides from bacterial membrane prolipoproteins. Hydrolyzes -Xaa-Yaa-Zaa-|-(S,diacylglyceryl)Cys-, in which Xaa is hydrophobic (preferably Leu), and Yaa (Ala or Ser) and Zaa (Gly or Ala) have small, neutral side chains.. It participates in protein modification; lipoprotein biosynthesis (signal peptide cleavage). In terms of biological role, this protein specifically catalyzes the removal of signal peptides from prolipoproteins. The chain is Lipoprotein signal peptidase from Burkholderia cenocepacia (strain ATCC BAA-245 / DSM 16553 / LMG 16656 / NCTC 13227 / J2315 / CF5610) (Burkholderia cepacia (strain J2315)).